The sequence spans 275 residues: NADPH-dependent 7-cyano-7-deazaguanine reductase (275 aa).

81 to 83 contacts substrate; that stretch reads IES. 83-84 contributes to the NADPH binding site; that stretch reads SK. Catalysis depends on cysteine 181, which acts as the Thioimide intermediate. Catalysis depends on aspartate 188, which acts as the Proton donor. Residue 220–221 coordinates substrate; sequence HE. 249 to 250 contributes to the NADPH binding site; sequence RG.

It belongs to the GTP cyclohydrolase I family. QueF type 2 subfamily. In terms of assembly, homodimer.

It is found in the cytoplasm. It catalyses the reaction 7-aminomethyl-7-carbaguanine + 2 NADP(+) = 7-cyano-7-deazaguanine + 2 NADPH + 3 H(+). The protein operates within tRNA modification; tRNA-queuosine biosynthesis. Catalyzes the NADPH-dependent reduction of 7-cyano-7-deazaguanine (preQ0) to 7-aminomethyl-7-deazaguanine (preQ1). The sequence is that of NADPH-dependent 7-cyano-7-deazaguanine reductase from Xylella fastidiosa (strain M12).